The primary structure comprises 586 residues: MVTHRQRYREKVSQMVSWGHWFALFNILLATLLGSRYLFVADWPTTLAGRIYSYLSIVGHFSFLVFATYLLILFPLTFIVMSQRLMRFLSAILATAGMTLLLIDSEVFTRFHLHLNPIVWELVINPDQNEMARDWQLMFISVPVILLIEMLFATWSWQKLRSLTRRRHFARPLAAFFFVSFIASHLIYIWADANFYRPITMQRANLPLSYPMTARRFLEKHGLLDAQEYQRRLVEQGNPEAVSVQYPLSNLHYRDMGTGQNVLLITVDGLNYSRFEKQMPELATFAEQNIDFTRHMSSGNTTDNGIFGLFYGISPGYMDGVLSTRTPAALITALNQQGYQLGLFSSDGFASPLYRQALLSDFSMPAAQTQSDAQTASQWIDWLGRYAQEDNRWFSWISFNGTNIDDSNQKNFVKRYASAASDVDAQINRVLNALREAGKFDNTVVIITAGRGIPLTPEENRFDWSQGHLQVPLVIHWPGTPAQRINVLTDHTDVMTTLMQRLLHVSTPANEYSQGQDIFTVPRRHNWVTAADGSTLAITTPQMTLVLNNNGHYQTYDLHGEKIKDQKPQLSLLLQVLTEEKRFIAN.

The Cytoplasmic portion of the chain corresponds to 1–20 (MVTHRQRYREKVSQMVSWGH). A helical transmembrane segment spans residues 21–43 (WFALFNILLATLLGSRYLFVADW). Topologically, residues 44-57 (PTTLAGRIYSYLSI) are periplasmic. The chain crosses the membrane as a helical span at residues 58 to 80 (VGHFSFLVFATYLLILFPLTFIV). The Cytoplasmic portion of the chain corresponds to 81–84 (MSQR). Residues 85-103 (LMRFLSAILATAGMTLLLI) form a helical membrane-spanning segment. The Periplasmic segment spans residues 104 to 134 (DSEVFTRFHLHLNPIVWELVINPDQNEMARD). A helical membrane pass occupies residues 135–157 (WQLMFISVPVILLIEMLFATWSW). The Cytoplasmic segment spans residues 158 to 168 (QKLRSLTRRRH). Residues 169 to 191 (FARPLAAFFFVSFIASHLIYIWA) form a helical membrane-spanning segment. Topologically, residues 192–586 (DANFYRPITM…LTEEKRFIAN (395 aa)) are periplasmic.

To H.influenzae HI_0842.

The protein resides in the cell inner membrane. This Salmonella typhimurium (strain LT2 / SGSC1412 / ATCC 700720) protein is Inner membrane protein YejM (yejM).